A 92-amino-acid chain; its full sequence is Small ribosomal subunit protein uS19 (92 aa).

Belongs to the universal ribosomal protein uS19 family.

Protein S19 forms a complex with S13 that binds strongly to the 16S ribosomal RNA. The protein is Small ribosomal subunit protein uS19 of Tolumonas auensis (strain DSM 9187 / NBRC 110442 / TA 4).